Consider the following 292-residue polypeptide: Nitrogenase iron protein 2 (292 aa).

An ATP-binding site is contributed by 8–15; that stretch reads GKGGIGKS. Cysteine 106 contributes to the [4Fe-4S] cluster binding site. Arginine 109 carries the post-translational modification ADP-ribosylarginine; by dinitrogenase reductase ADP-ribosyltransferase. Cysteine 142 is a [4Fe-4S] cluster binding site.

Belongs to the NifH/BchL/ChlL family. In terms of assembly, homodimer. [4Fe-4S] cluster serves as cofactor. In terms of processing, the reversible ADP-ribosylation of Arg-109 inactivates the nitrogenase reductase and regulates nitrogenase activity.

The catalysed reaction is N2 + 8 reduced [2Fe-2S]-[ferredoxin] + 16 ATP + 16 H2O = H2 + 8 oxidized [2Fe-2S]-[ferredoxin] + 2 NH4(+) + 16 ADP + 16 phosphate + 6 H(+). Functionally, the key enzymatic reactions in nitrogen fixation are catalyzed by the nitrogenase complex, which has 2 components: the iron protein and the molybdenum-iron protein. This Methanothermococcus thermolithotrophicus (Methanococcus thermolithotrophicus) protein is Nitrogenase iron protein 2 (nifH2).